We begin with the raw amino-acid sequence, 678 residues long: Translation factor GUF1 homolog, chloroplastic (678 aa).

A chloroplast-targeting transit peptide spans 1 to 43 (MASILLSLNTHTLLPLHTRTRTTKTTLKILRFSHKLPPSSPFY). Residues 81–262 (KNIRNFCIIA…AIVERVPPPR (182 aa)) enclose the tr-type G domain. GTP contacts are provided by residues 90-97 (AHIDHGKS), 155-159 (DTPGH), and 209-212 (NKID).

It belongs to the TRAFAC class translation factor GTPase superfamily. Classic translation factor GTPase family. LepA subfamily.

It is found in the plastid. The protein localises to the chloroplast. The enzyme catalyses GTP + H2O = GDP + phosphate + H(+). Its function is as follows. Promotes chloroplast protein synthesis. May act as a fidelity factor of the translation reaction, by catalyzing a one-codon backward translocation of tRNAs on improperly translocated ribosomes. The chain is Translation factor GUF1 homolog, chloroplastic from Populus trichocarpa (Western balsam poplar).